A 185-amino-acid chain; its full sequence is Probable DNA-directed RNA polymerase subunit delta (185 aa).

Positions 14–81 constitute an HTH HARE-type domain; it reads LSMIEVAHAI…GDNTWGLRAW (68 aa). Residues 90–185 form a disordered region; that stretch reads ATVGENEEDE…DEEDEDEDDE (96 aa). Composition is skewed to acidic residues over residues 117 to 167 and 175 to 185; these read DTDD…DDGI and HDEEDEDEDDE.

This sequence belongs to the RpoE family. As to quaternary structure, RNAP is composed of a core of 2 alpha, a beta and a beta' subunits. The core is associated with a delta subunit and one of several sigma factors.

Functionally, participates in both the initiation and recycling phases of transcription. In the presence of the delta subunit, RNAP displays an increased specificity of transcription, a decreased affinity for nucleic acids, and an increased efficiency of RNA synthesis because of enhanced recycling. This is Probable DNA-directed RNA polymerase subunit delta from Limosilactobacillus reuteri (strain DSM 20016) (Lactobacillus reuteri).